The primary structure comprises 638 residues: 1-deoxy-D-xylulose-5-phosphate synthase (638 aa).

Thiamine diphosphate contacts are provided by residues H79 and 120–122 (AHS). D151 serves as a coordination point for Mg(2+). Thiamine diphosphate-binding positions include 152-153 (GA), N180, Y289, and E371. N180 is a Mg(2+) binding site.

This sequence belongs to the transketolase family. DXPS subfamily. Homodimer. Requires Mg(2+) as cofactor. The cofactor is thiamine diphosphate.

The catalysed reaction is D-glyceraldehyde 3-phosphate + pyruvate + H(+) = 1-deoxy-D-xylulose 5-phosphate + CO2. It functions in the pathway metabolic intermediate biosynthesis; 1-deoxy-D-xylulose 5-phosphate biosynthesis; 1-deoxy-D-xylulose 5-phosphate from D-glyceraldehyde 3-phosphate and pyruvate: step 1/1. Its function is as follows. Catalyzes the acyloin condensation reaction between C atoms 2 and 3 of pyruvate and glyceraldehyde 3-phosphate to yield 1-deoxy-D-xylulose-5-phosphate (DXP). The protein is 1-deoxy-D-xylulose-5-phosphate synthase of Rhizobium etli (strain ATCC 51251 / DSM 11541 / JCM 21823 / NBRC 15573 / CFN 42).